The sequence spans 264 residues: Glutamate racemase (264 aa).

Residues 10–11 (DS) and 42–43 (YG) each bind substrate. Cysteine 73 (proton donor/acceptor) is an active-site residue. 74-75 (NT) lines the substrate pocket. Cysteine 183 (proton donor/acceptor) is an active-site residue. 184–185 (TH) is a binding site for substrate.

The protein belongs to the aspartate/glutamate racemases family.

It carries out the reaction L-glutamate = D-glutamate. Its pathway is cell wall biogenesis; peptidoglycan biosynthesis. Its function is as follows. Provides the (R)-glutamate required for cell wall biosynthesis. This chain is Glutamate racemase, found in Streptococcus pyogenes serotype M2 (strain MGAS10270).